The primary structure comprises 764 residues: MIQTLKTDSSFRLCFAAIAFGFVFIMNGKLSSGTTPHEFPVYIFYLGERKHDDPNLVTQSHLEILKSVLGSEEATNKSMVYSYHHGFSGFAAKLKPAEAEKLKKHPEVIILLENRKLGLQTTRTWDYLGQFSTPTSSKSLLHETNMGSGAIIGVIDSGIWSESGSFDDDGYGPIPKHWKGQCVSADQFSPADCNKKLIGAKYYIDGLNADLETSINSTTEYLSPRDHNGHGTQVSSTAAGSFVSNMTLLGLSSGSIMRGGAPKAHIAMYKACWDVEGGMCSVADVWKAFDEAIHDGVDVLSVSVGGSALKTLDVEIDIAIPALHAVNKGIPVVSPAGNEGSRSSSVINVSPWILTVAATTLDRSFSTLITLENNKTYLGQSLYTGPEISFTDVICTGDHSNVDQITKGKVIMHFSMGPVRPLTPDVVQKNGGIGLIYVRNPGDSRVECPVNFPCIYLDMEVGSELYTYIQTRSSMKIKISPYKTIIGESVASKVAKSSARGPSSFSPAILKPDIAAPGLTLLTPRIPTDEDTREFVYSGTSMATPVIAGIVALLKISHPNWSPAVIKSALVTTAMKTDPYGERLTVDGGNYKVADAFDYGGGLVNLEKATDPGLVYDMDINDYTHYLCSQTLYTDKKVSALTGNVNNKCPSSSSSILDLNVPSITIPDLKGTVNVTRTVTNVGRVKSVYKPVIEAPFGFNVVVSPKKLKFNKTRNKLAFTVTVSPGSHRVNTAFYFGSLTWSDKVHNVTIPISLRTRFIDNFFL.

The first 32 residues, methionine 1–serine 32, serve as a signal peptide directing secretion. The propeptide at glycine 33–glutamine 120 is activation peptide. An Inhibitor I9 domain is found at valine 41 to lysine 116. Asparagine 76 carries N-linked (GlcNAc...) asparagine glycosylation. In terms of domain architecture, Peptidase S8 spans threonine 124–threonine 610. The active-site Charge relay system is the aspartate 156. N-linked (GlcNAc...) asparagine glycosylation occurs at asparagine 216. Catalysis depends on histidine 230, which acts as the Charge relay system. Residues asparagine 245 and asparagine 374 are each glycosylated (N-linked (GlcNAc...) asparagine). The Charge relay system role is filled by serine 541. Asparagine 674, asparagine 711, and asparagine 747 each carry an N-linked (GlcNAc...) asparagine glycan.

Belongs to the peptidase S8 family.

Its subcellular location is the secreted. The polypeptide is Subtilisin-like protease SBT3.1 (Arabidopsis thaliana (Mouse-ear cress)).